We begin with the raw amino-acid sequence, 115 residues long: uncharacterized protein (115 aa).

The next 3 membrane-spanning stretches (helical) occupy residues 7–27 (TLIF…IWFD), 40–60 (YALT…LLAA), and 72–92 (IVLV…YFYL).

It is found in the cell membrane. This is an uncharacterized protein from Haemophilus influenzae (strain ATCC 51907 / DSM 11121 / KW20 / Rd).